Consider the following 289-residue polypeptide: 4-hydroxy-tetrahydrodipicolinate synthase (289 aa).

Pyruvate is bound at residue Thr-44. The Proton donor/acceptor role is filled by Tyr-132. Lys-161 (schiff-base intermediate with substrate) is an active-site residue. A pyruvate-binding site is contributed by Ile-201.

This sequence belongs to the DapA family. As to quaternary structure, homotetramer; dimer of dimers.

It is found in the cytoplasm. It catalyses the reaction L-aspartate 4-semialdehyde + pyruvate = (2S,4S)-4-hydroxy-2,3,4,5-tetrahydrodipicolinate + H2O + H(+). The protein operates within amino-acid biosynthesis; L-lysine biosynthesis via DAP pathway; (S)-tetrahydrodipicolinate from L-aspartate: step 3/4. Functionally, catalyzes the condensation of (S)-aspartate-beta-semialdehyde [(S)-ASA] and pyruvate to 4-hydroxy-tetrahydrodipicolinate (HTPA). This chain is 4-hydroxy-tetrahydrodipicolinate synthase, found in Methanocaldococcus jannaschii (strain ATCC 43067 / DSM 2661 / JAL-1 / JCM 10045 / NBRC 100440) (Methanococcus jannaschii).